Consider the following 317-residue polypeptide: Protein IMPACT-B (317 aa).

Residues 17–118 (EEIEALSSIY…EKIREFLTEK (102 aa)) enclose the RWD domain. Residues 296 to 317 (DSTEETSKAGGKSKKPKSKKTK) form a disordered region. Over residues 306–317 (GKSKKPKSKKTK) the composition is skewed to basic residues.

Belongs to the IMPACT family. As to quaternary structure, interacts with GCN1; prevents the interaction of GCN1 with EIF2AK4/GCN2 and inhibits EIF2AK4/GCN2 kinase activity. Interaction with RPL39; this interaction occurs in a GCN1-independent manner. Associates with ribosomes; this interaction occurs in a GCN1-independent manner. Associates with actin; this interaction occurs in a GCN1-independent manner.

It localises to the cytoplasm. Its function is as follows. Translational regulator that ensures constant high levels of translation upon a variety of stress conditions, such as amino acid starvation, UV-C irradiation, proteasome inhibitor treatment and glucose deprivation. Plays a role as a negative regulator of the EIF2AK4/GCN2 kinase activity; impairs GCN1-mediated EIF2AK4/GCN2 activation, and hence EIF2AK4/GCN2-mediated eIF-2-alpha phosphorylation and subsequent down-regulation of protein synthesis. Plays a role in differentiation of neuronal cells by stimulating neurite outgrowth. The chain is Protein IMPACT-B (impact-B) from Xenopus tropicalis (Western clawed frog).